The primary structure comprises 572 residues: Proline--tRNA ligase (572 aa).

Belongs to the class-II aminoacyl-tRNA synthetase family. ProS type 1 subfamily. In terms of assembly, homodimer. May form a tertiary complex with YbaK and t-RNA(Pro).

It localises to the cytoplasm. The catalysed reaction is tRNA(Pro) + L-proline + ATP = L-prolyl-tRNA(Pro) + AMP + diphosphate. Functionally, catalyzes the attachment of proline to tRNA(Pro) in a two-step reaction: proline is first activated by ATP to form Pro-AMP and then transferred to the acceptor end of tRNA(Pro). As ProRS can inadvertently accommodate and process non-cognate amino acids such as alanine and cysteine, to avoid such errors it has two additional distinct editing activities against alanine. One activity is designated as 'pretransfer' editing and involves the tRNA(Pro)-independent hydrolysis of activated Ala-AMP. The other activity is designated 'posttransfer' editing and involves deacylation of mischarged Ala-tRNA(Pro). The misacylated Cys-tRNA(Pro) is not edited by ProRS, but is probably edited in trans by YbaK. The protein is Proline--tRNA ligase of Haemophilus influenzae (strain ATCC 51907 / DSM 11121 / KW20 / Rd).